The following is a 160-amino-acid chain: NADH-quinone oxidoreductase subunit I (160 aa).

4Fe-4S ferredoxin-type domains follow at residues 51–80 (RRYKNGEERCIACKLCEVVCPAQAITIEAA) and 91–120 (TKYDIDMTKCIYCGFCQEACPVDAIVEGPN). [4Fe-4S] cluster contacts are provided by C60, C63, C66, C70, C100, C103, C106, and C110.

It belongs to the complex I 23 kDa subunit family. In terms of assembly, NDH-1 is composed of 14 different subunits. Subunits NuoA, H, J, K, L, M, N constitute the membrane sector of the complex. [4Fe-4S] cluster serves as cofactor.

The protein resides in the cell inner membrane. The catalysed reaction is a quinone + NADH + 5 H(+)(in) = a quinol + NAD(+) + 4 H(+)(out). NDH-1 shuttles electrons from NADH, via FMN and iron-sulfur (Fe-S) centers, to quinones in the respiratory chain. The immediate electron acceptor for the enzyme in this species is believed to be ubiquinone. Couples the redox reaction to proton translocation (for every two electrons transferred, four hydrogen ions are translocated across the cytoplasmic membrane), and thus conserves the redox energy in a proton gradient. The chain is NADH-quinone oxidoreductase subunit I from Neorickettsia sennetsu (strain ATCC VR-367 / Miyayama) (Ehrlichia sennetsu).